We begin with the raw amino-acid sequence, 464 residues long: Protein FAM90A18 (464 aa).

3 disordered regions span residues 1–42 (MMAR…DPRL), 70–387 (PATL…ASHD), and 415–437 (HSPEKPGAFLAQSPHVSEKSEAP). Basic and acidic residues-rich tracts occupy residues 74–89 (GKKEGKENLKPWKPRV) and 97–114 (NKDKGEKEERPRQQDPQR). Positions 180-197 (LASLSPLRKASLSSSSSL) are enriched in low complexity.

This sequence belongs to the FAM90 family.

In Homo sapiens (Human), this protein is Protein FAM90A18.